The sequence spans 481 residues: Arginine biosynthesis bifunctional protein ArgJ, chloroplastic (481 aa).

The substrate site is built by Thr-225, Lys-251, Thr-262, Glu-349, Asn-476, and Thr-481. Thr-262 functions as the Nucleophile in the catalytic mechanism.

It belongs to the ArgJ family. As to quaternary structure, heterodimer of an alpha and a beta chain.

It is found in the plastid. The protein localises to the chloroplast. The catalysed reaction is N(2)-acetyl-L-ornithine + L-glutamate = N-acetyl-L-glutamate + L-ornithine. The enzyme catalyses L-glutamate + acetyl-CoA = N-acetyl-L-glutamate + CoA + H(+). Its pathway is amino-acid biosynthesis; L-arginine biosynthesis; L-ornithine and N-acetyl-L-glutamate from L-glutamate and N(2)-acetyl-L-ornithine (cyclic): step 1/1. It participates in amino-acid biosynthesis; L-arginine biosynthesis; N(2)-acetyl-L-ornithine from L-glutamate: step 1/4. Functionally, catalyzes two activities which are involved in the cyclic version of arginine biosynthesis: the synthesis of acetylglutamate from glutamate and acetyl-CoA, and of ornithine by transacetylation between acetylornithine and glutamate. The polypeptide is Arginine biosynthesis bifunctional protein ArgJ, chloroplastic (Populus trichocarpa (Western balsam poplar)).